Here is an 85-residue protein sequence, read N- to C-terminus: Conotoxin Lt28.4 (85 aa).

The first 21 residues, 1–21 (MPKLEMMLLVLLILPLCYIDA), serve as a signal peptide directing secretion. Positions 22–40 (VGPPPPWNMEDEIIEHWQK) are excised as a propeptide.

It belongs to the conotoxin D superfamily. Post-translationally, contains 5 disulfide bonds. In terms of tissue distribution, expressed by the venom duct.

The protein localises to the secreted. Its function is as follows. Probable neurotoxin. This is Conotoxin Lt28.4 from Conus litteratus (Lettered cone).